Consider the following 99-residue polypeptide: Large ribosomal subunit protein bL21 (99 aa).

Belongs to the bacterial ribosomal protein bL21 family. In terms of assembly, part of the 50S ribosomal subunit. Contacts protein L20.

In terms of biological role, this protein binds to 23S rRNA in the presence of protein L20. The polypeptide is Large ribosomal subunit protein bL21 (Mycoplasma mobile (strain ATCC 43663 / 163K / NCTC 11711) (Mesomycoplasma mobile)).